The chain runs to 79 residues: Reactive oxygen species modulator 1 (79 aa).

The chain crosses the membrane as a helical span at residues G22–R44. Residues C42–M60 form a sufficient for antibacterial activity region.

Belongs to the MGR2 family.

The protein resides in the mitochondrion inner membrane. Functionally, has antibacterial activity against a variety of bacteria including S.aureus, P.aeruginosa and M.tuberculosis. Acts by inducing bacterial membrane breakage. Induces production of reactive oxygen species (ROS) which are necessary for cell proliferation. May play a role in inducing oxidative DNA damage and replicative senescence. May play a role in the coordination of mitochondrial morphology and cell proliferation. This Sus scrofa (Pig) protein is Reactive oxygen species modulator 1 (ROMO1).